A 296-amino-acid polypeptide reads, in one-letter code: Ribonuclease HIII (296 aa).

The RNase H type-2 domain maps to 81 to 296 (QAMIGTDEVG…TQKAKQLLER (216 aa)). The a divalent metal cation site is built by D87, E88, and D190.

This sequence belongs to the RNase HII family. RnhC subfamily. Mn(2+) serves as cofactor. Requires Mg(2+) as cofactor.

The protein resides in the cytoplasm. It carries out the reaction Endonucleolytic cleavage to 5'-phosphomonoester.. Endonuclease that specifically degrades the RNA of RNA-DNA hybrids. This Streptococcus gordonii (strain Challis / ATCC 35105 / BCRC 15272 / CH1 / DL1 / V288) protein is Ribonuclease HIII.